The chain runs to 145 residues: Ribonuclease HI (145 aa).

In terms of domain architecture, RNase H type-1 spans 1–142 (MNQTVYLYTD…ADDLANRGAA (142 aa)). Aspartate 10, glutamate 48, aspartate 70, and aspartate 134 together coordinate Mg(2+).

The protein belongs to the RNase H family. Monomer. Mg(2+) is required as a cofactor.

The protein resides in the cytoplasm. The catalysed reaction is Endonucleolytic cleavage to 5'-phosphomonoester.. Its function is as follows. Endonuclease that specifically degrades the RNA of RNA-DNA hybrids. The protein is Ribonuclease HI of Neisseria meningitidis serogroup A / serotype 4A (strain DSM 15465 / Z2491).